The chain runs to 127 residues: Venom protein family 16 protein 1 (127 aa).

An N-terminal signal peptide occupies residues 1–18; that stretch reads MWIWYSLLFFGVCHLAHS.

In terms of tissue distribution, expressed by the venom gland (anterior main gland) (at protein level).

Its subcellular location is the secreted. This is Venom protein family 16 protein 1 from Platymeris rhadamanthus (Red spot assassin bug).